The following is a 185-amino-acid chain: Elongation factor P (185 aa).

The protein belongs to the elongation factor P family.

Its subcellular location is the cytoplasm. The protein operates within protein biosynthesis; polypeptide chain elongation. Its function is as follows. Involved in peptide bond synthesis. Stimulates efficient translation and peptide-bond synthesis on native or reconstituted 70S ribosomes in vitro. Probably functions indirectly by altering the affinity of the ribosome for aminoacyl-tRNA, thus increasing their reactivity as acceptors for peptidyl transferase. The protein is Elongation factor P of Deinococcus deserti (strain DSM 17065 / CIP 109153 / LMG 22923 / VCD115).